The primary structure comprises 94 residues: Selenoprotein K (94 aa).

A helical transmembrane segment spans residues 20–42; that stretch reads LSLITDFFWGIAEFVVLFFKTLL. Positions 48–94 are disordered; sequence KRRSYGNSSDSRYDDGRGPPGNPPRRMGRINHLRGPSPPPMAGGUGR. A non-standard amino acid (selenocysteine) is located at residue selenocysteine 92.

The protein belongs to the selenoprotein K family. In terms of assembly, interacts with DERL1, DERL2, DERL3 and SELENOS. The SELENOK-SELENOS complex interacts with VCP. Interacts with ZDHHC6. In terms of processing, cleaved by CAPN2/m-calpain in resting macrophages but not in activated macrophages. Macrophage activation up-regulates expression of the calpain inhibitor CAST/calpastatin, resulting in inhibition of CAPN2 activity. Post-translationally, truncated SELENOK proteins produced by failed UGA/Sec decoding are ubiquitinated by the CRL2(KLHDC2) complex, which recognizes the diglycine (Gly-Gly) at the C-terminus of truncated SELENOK proteins. As to expression, highly expressed in heart.

It localises to the endoplasmic reticulum membrane. Its subcellular location is the cell membrane. Its function is as follows. Required for Ca(2+) flux in immune cells and plays a role in T-cell proliferation and in T-cell and neutrophil migration. Involved in endoplasmic reticulum-associated degradation (ERAD) of soluble glycosylated proteins. Required for palmitoylation and cell surface expression of CD36 and involved in macrophage uptake of low-density lipoprotein and in foam cell formation. Together with ZDHHC6, required for palmitoylation of ITPR1 in immune cells, leading to regulate ITPR1 stability and function. Plays a role in protection of cells from ER stress-induced apoptosis. Protects cells from oxidative stress when overexpressed in cardiomyocytes. This Homo sapiens (Human) protein is Selenoprotein K.